The sequence spans 174 residues: Mitochondrial holo-[acyl-carrier-protein] synthase (174 aa).

Belongs to the P-Pant transferase superfamily. AcpS family.

The protein resides in the mitochondrion. It carries out the reaction apo-[ACP] + CoA = holo-[ACP] + adenosine 3',5'-bisphosphate + H(+). In terms of biological role, transfers the 4'-phosphopantetheine moiety from coenzyme A to a Ser of mitochondrial acyl-carrier-protein. This is Mitochondrial holo-[acyl-carrier-protein] synthase (PPT2) from Eremothecium gossypii (strain ATCC 10895 / CBS 109.51 / FGSC 9923 / NRRL Y-1056) (Yeast).